The following is a 473-amino-acid chain: GTPase Der (473 aa).

EngA-type G domains follow at residues 3 to 167 (FKVA…KGLE) and 203 to 378 (LRVA…TFWN). Residues 9–16 (GRPNVGKS), 56–60 (DTAGL), 119–122 (NKCE), 209–216 (GRPNVGKS), 256–260 (DTAGM), and 321–324 (NKWD) each bind GTP. The KH-like domain occupies 379–463 (ARVPTARLNR…PIRLFMRKTH (85 aa)).

Belongs to the TRAFAC class TrmE-Era-EngA-EngB-Septin-like GTPase superfamily. EngA (Der) GTPase family. As to quaternary structure, associates with the 50S ribosomal subunit.

Its function is as follows. GTPase that plays an essential role in the late steps of ribosome biogenesis. This is GTPase Der from Parvibaculum lavamentivorans (strain DS-1 / DSM 13023 / NCIMB 13966).